The sequence spans 363 residues: Pyrimidine monooxygenase RutA (363 aa).

FMN-binding positions include 49-50 (IK), Asn115, Glu124, 140-141 (RY), and Ser190.

It belongs to the NtaA/SnaA/DszA monooxygenase family. RutA subfamily.

It carries out the reaction uracil + FMNH2 + NADH + O2 = (Z)-3-ureidoacrylate + FMN + NAD(+) + H2O + H(+). It catalyses the reaction thymine + FMNH2 + NADH + O2 = (Z)-2-methylureidoacrylate + FMN + NAD(+) + H2O + H(+). Functionally, catalyzes the pyrimidine ring opening between N-3 and C-4 by an unusual flavin hydroperoxide-catalyzed mechanism, adding oxygen atoms in the process to yield ureidoacrylate peracid, that immediately reacts with FMN forming ureidoacrylate and FMN-N(5)-oxide. The FMN-N(5)-oxide reacts spontaneously with NADH to produce FMN. Requires the flavin reductase RutF to regenerate FMN in vivo. In Klebsiella pneumoniae (strain 342), this protein is Pyrimidine monooxygenase RutA.